A 448-amino-acid polypeptide reads, in one-letter code: Tryptophan dimethylallyltransferase 1 (448 aa).

L-tryptophan is bound by residues 80-81 and E89; that span reads IL. Residues R100, K186, and Y188 each coordinate substrate. Residues Y190 and R249 each coordinate L-tryptophan. Residues R262, K264, Y266, Q348, Y350, Y414, and Y418 each coordinate substrate.

This sequence belongs to the tryptophan dimethylallyltransferase family. As to quaternary structure, homodimer.

The catalysed reaction is L-tryptophan + dimethylallyl diphosphate = 4-(3-methylbut-2-enyl)-L-tryptophan + diphosphate. It functions in the pathway alkaloid biosynthesis; ergot alkaloid biosynthesis. In terms of biological role, tryptophan dimethylallyltransferase; part of the gene cluster that mediates the biosynthesis of fungal ergot alkaloid. DmaW catalyzes the first step of ergot alkaloid biosynthesis by condensing dimethylallyl diphosphate (DMAP) and tryptophan to form 4-dimethylallyl-L-tryptophan. The second step is catalyzed by the methyltransferase easF that methylates 4-dimethylallyl-L-tryptophan in the presence of S-adenosyl-L-methionine, resulting in the formation of 4-dimethylallyl-L-abrine. The catalase easC and the FAD-dependent oxidoreductase easE then transform 4-dimethylallyl-L-abrine to chanoclavine-I which is further oxidized by easD in the presence of NAD(+), resulting in the formation of chanoclavine-I aldehyde. Agroclavine dehydrogenase easG then mediates the conversion of chanoclavine-I aldehyde to agroclavine via a non-enzymatic adduct reaction: the substrate is an iminium intermediate that is formed spontaneously from chanoclavine-I aldehyde in the presence of glutathione. The presence of easA is not required to complete this reaction. Further conversion of agroclavine to paspalic acid is a two-step process involving oxidation of agroclavine to elymoclavine and of elymoclavine to paspalic acid, the second step being performed by the elymoclavine oxidase cloA. Paspalic acid is then further converted to D-lysergic acid. Ergopeptines are assembled from D-lysergic acid and three different amino acids by the D-lysergyl-peptide-synthetases composed each of a monomudular and a trimodular nonribosomal peptide synthetase subunit. LpsB and lpsC encode the monomodular subunits responsible for D-lysergic acid activation and incorporation into the ergopeptine backbone. LpsA1 and A2 subunits encode the trimodular nonribosomal peptide synthetase assembling the tripeptide portion of ergopeptines. LpsA1 is responsible for formation of the major ergopeptine, ergotamine, and lpsA2 for alpha-ergocryptine, the minor ergopeptine of the total alkaloid mixture elaborated by C.purpurea. D-lysergyl-tripeptides are assembled by the nonribosomal peptide synthetases and released as N-(D-lysergyl-aminoacyl)-lactams. Cyclolization of the D-lysergyl-tripeptides is performed by the Fe(2+)/2-ketoglutarate-dependent dioxygenase easH which introduces a hydroxyl group into N-(D-lysergyl-aminoacyl)-lactam at alpha-C of the aminoacyl residue followed by spontaneous condensation with the terminal lactam carbonyl group. This Claviceps purpurea (Ergot fungus) protein is Tryptophan dimethylallyltransferase 1.